A 168-amino-acid polypeptide reads, in one-letter code: Diphosphoinositol polyphosphate phosphohydrolase 1 (168 aa).

Position 1 is an N-acetylmethionine (methionine 1). Residues arginine 10, lysine 18–arginine 20, and serine 39–arginine 41 contribute to the substrate site. One can recognise a Nudix hydrolase domain in the interval tyrosine 17–arginine 144. Positions 50 and 66 each coordinate Mg(2+). A Nudix box motif is present at residues glycine 51–glycine 72. Residue glutamate 69 is the Proton acceptor of the active site. Residue glutamate 70 coordinates Mg(2+). Substrate is bound by residues arginine 89–histidine 91, arginine 115, and lysine 133.

The protein belongs to the Nudix hydrolase family. DIPP subfamily. In terms of assembly, monomer. The cofactor is Mg(2+). It depends on Mn(2+) as a cofactor. Zn(2+) is required as a cofactor. Present in heart, lung, liver and spleen (at protein level). Widely expressed.

The protein localises to the cytoplasm. The protein resides in the nucleus. The catalysed reaction is diphospho-myo-inositol polyphosphate + H2O = myo-inositol polyphosphate + phosphate.. The enzyme catalyses 5-diphospho-1D-myo-inositol 1,2,3,4,6-pentakisphosphate + H2O = 1D-myo-inositol hexakisphosphate + phosphate + H(+). It catalyses the reaction 3,5-bis(diphospho)-1D-myo-inositol 1,2,4,6-tetrakisphosphate + H2O = 3-diphospho-1D-myo-inositol 1,2,4,5,6-pentakisphosphate + phosphate + 2 H(+). It carries out the reaction [phosphate](n+1) + n H2O = (n+1) phosphate + n H(+). The catalysed reaction is P(1),P(5)-bis(5'-adenosyl) pentaphosphate + H2O = ADP + ATP + 2 H(+). The enzyme catalyses P(1),P(6)-bis(5'-adenosyl) hexaphosphate + H2O = 2 ATP + 2 H(+). It catalyses the reaction P(1),P(4)-bis(5'-adenosyl) tetraphosphate + H2O = AMP + ATP + 2 H(+). It carries out the reaction a 5'-end (N(7)-methyl 5'-triphosphoguanosine)-ribonucleoside in mRNA + H2O = N(7)-methyl-GMP + a 5'-end diphospho-ribonucleoside in mRNA + 2 H(+). The catalysed reaction is a 5'-end (N(7)-methyl 5'-triphosphoguanosine)-ribonucleoside in mRNA + H2O = N(7)-methyl-GDP + a 5'-end phospho-ribonucleoside in mRNA + 2 H(+). Functionally, cleaves a beta-phosphate from the diphosphate groups in PP-InsP5 (diphosphoinositol pentakisphosphate) and [PP]2-InsP4 (bisdiphosphoinositol tetrakisphosphate), suggesting that it may play a role in signal transduction. InsP6 (inositol hexakisphosphate) is not a substrate. Also able to catalyze the hydrolysis of dinucleoside oligophosphates, with diadenosine 5',5'''-P1,P6-hexaphosphate (Ap6A) and diadenosine 5',5'''- P1,P5-pentaphosphate (Ap5A) being the preferred substrates. The major reaction products are ADP and p4a from Ap6A and ADP and ATP from Ap5A. Also able to hydrolyze 5- phosphoribose 1-diphosphate. Acts as a negative regulator of the ERK1/2 pathway. Acts as a decapping enzyme that can hydrolyze both monomethylated and unmethylated capped RNAs. Hydrolyzes monomethylated capped RNA after both the alpha- and beta-phosphates generating m7GMP + ppRNA and m7GDP + pRNA. Modulates the stability of a subset of mRNAs implicated in cell motility. Divalent cations zinc, magnesium and manganese determine its substrate specificity. Exhibits diphosphoinositol polyphosphate phosphohydrolase in the presence of magnesium ions, diadenosine hexaphosphate hydrolase activity in the presence of manganese ions and endopolyphosphatase activity in the presence of zinc ions. Plays an important role in limiting DNA damage and maintaining cell survival upon oxidative stress via its endopolyphosphatase activity. The polypeptide is Diphosphoinositol polyphosphate phosphohydrolase 1 (Mus musculus (Mouse)).